Consider the following 351-residue polypeptide: Muscleblind-like protein 2a (351 aa).

C3H1-type zinc fingers lie at residues 13–41 (WLTL…HPPK), 47–73 (NGRV…HPPA), 177–205 (TDKL…HPSD), and 213–239 (DNTV…HPPA).

This sequence belongs to the muscleblind family. In terms of tissue distribution, expressed in fast and slow myotomal muscle, heart, liver, skin, brain and testis.

The protein localises to the nucleus. It is found in the cytoplasm. Its function is as follows. Involved in pre-mRNA alternative splicing regulation. RNA-binding protein that binds to 5'ACACCC-3' core sequence. The polypeptide is Muscleblind-like protein 2a (mbnl2a) (Takifugu rubripes (Japanese pufferfish)).